The primary structure comprises 360 residues: Photosystem II protein D1 (360 aa).

The next 3 helical transmembrane spans lie at 29–46, 118–133, and 142–156; these read YIGW…TATC, HFLI…EWEL, and WICV…AATA. Position 118 (His-118) interacts with chlorophyll a. Tyr-126 is a binding site for pheophytin a. Positions 170 and 189 each coordinate [CaMn4O5] cluster. Residues 197–218 traverse the membrane as a helical segment; the sequence is FHMAGVAGVFGGALFSAMHGSL. Residue His-198 coordinates chlorophyll a. Residues His-215 and 264 to 265 contribute to the a quinone site; that span reads SF. A Fe cation-binding site is contributed by His-215. Fe cation is bound at residue His-272. A helical membrane pass occupies residues 274–288; sequence FLGAWPVVGIWLTAI. [CaMn4O5] cluster-binding residues include His-332, Glu-333, Asp-342, and Ala-344. A propeptide spanning residues 345–360 is cleaved from the precursor; sequence SNSVVPVALTAPSVEA.

This sequence belongs to the reaction center PufL/M/PsbA/D family. In terms of assembly, PSII is composed of 1 copy each of membrane proteins PsbA, PsbB, PsbC, PsbD, PsbE, PsbF, PsbH, PsbI, PsbJ, PsbK, PsbL, PsbM, PsbT, PsbX, PsbY, PsbZ, Psb30/Ycf12, at least 3 peripheral proteins of the oxygen-evolving complex and a large number of cofactors. It forms dimeric complexes. The D1/D2 heterodimer binds P680, chlorophylls that are the primary electron donor of PSII, and subsequent electron acceptors. It shares a non-heme iron and each subunit binds pheophytin, quinone, additional chlorophylls, carotenoids and lipids. D1 provides most of the ligands for the Mn4-Ca-O5 cluster of the oxygen-evolving complex (OEC). There is also a Cl(-1) ion associated with D1 and D2, which is required for oxygen evolution. The PSII complex binds additional chlorophylls, carotenoids and specific lipids. is required as a cofactor. In terms of processing, tyr-161 forms a radical intermediate that is referred to as redox-active TyrZ, YZ or Y-Z. C-terminally processed by CTPA; processing is essential to allow assembly of the oxygen-evolving complex and thus photosynthetic growth.

It localises to the plastid. Its subcellular location is the chloroplast thylakoid membrane. It carries out the reaction 2 a plastoquinone + 4 hnu + 2 H2O = 2 a plastoquinol + O2. Functionally, photosystem II (PSII) is a light-driven water:plastoquinone oxidoreductase that uses light energy to abstract electrons from H(2)O, generating O(2) and a proton gradient subsequently used for ATP formation. It consists of a core antenna complex that captures photons, and an electron transfer chain that converts photonic excitation into a charge separation. The D1/D2 (PsbA/PsbD) reaction center heterodimer binds P680, the primary electron donor of PSII as well as several subsequent electron acceptors. This is Photosystem II protein D1 from Cyanidioschyzon merolae (strain NIES-3377 / 10D) (Unicellular red alga).